A 461-amino-acid chain; its full sequence is Protein eva-1 (461 aa).

The first 22 residues, 1-22 (MNMHIVSPVLLLFWFGIIVTDG), serve as a signal peptide directing secretion. Residues 55–160 (ACDGERITLS…KYLQMAYGCI (106 aa)) form the SUEL-type lectin domain. The helical transmembrane segment at 370–390 (VMCIVLAVSMAAIVVLSACII) threads the bilayer. The tract at residues 397 to 429 (NKDSSRSSRRSRSRRSLETSKLVSSNYGGSITP) is disordered. Residues 415–429 (TSKLVSSNYGGSITP) are compositionally biased toward polar residues.

Belongs to the EVA1 family. Interacts with sax-3. Interacts with slt-1. Interacts (via the SUEL-type lectin domain) with madd-4. Interacts (via the transmembrane domain) with unc-40.

Its subcellular location is the cell membrane. Functionally, acts as a receptor for slt-1. Required for the guidance of the AVM pioneer axon to the ventral nerve cord. Acts as a unc-40 coreceptor to enhance the sensitivity of unc-40 to the madd-4 midline guidance cue to guide muscle arm extensions (muscle arms) and AVM mechanosensory axons towards the dorsoventral midline. The sequence is that of Protein eva-1 (eva-1) from Caenorhabditis elegans.